We begin with the raw amino-acid sequence, 172 residues long: Putative phosphoesterase BCG9842_B4061 (172 aa).

Residue H34 is the Proton donor of the active site. 2 consecutive short sequence motifs (HXTX) follow at residues 34–37 (HITL) and 115–118 (HLTI). The active-site Proton acceptor is H115.

Belongs to the 2H phosphoesterase superfamily. YjcG family.

This Bacillus cereus (strain G9842) protein is Putative phosphoesterase BCG9842_B4061.